We begin with the raw amino-acid sequence, 270 residues long: Putative pyruvate, phosphate dikinase regulatory protein (270 aa).

ADP is bound at residue 147 to 154 (GVSRSSKT).

The protein belongs to the pyruvate, phosphate/water dikinase regulatory protein family. PDRP subfamily.

The catalysed reaction is N(tele)-phospho-L-histidyl/L-threonyl-[pyruvate, phosphate dikinase] + ADP = N(tele)-phospho-L-histidyl/O-phospho-L-threonyl-[pyruvate, phosphate dikinase] + AMP + H(+). It carries out the reaction N(tele)-phospho-L-histidyl/O-phospho-L-threonyl-[pyruvate, phosphate dikinase] + phosphate + H(+) = N(tele)-phospho-L-histidyl/L-threonyl-[pyruvate, phosphate dikinase] + diphosphate. Its function is as follows. Bifunctional serine/threonine kinase and phosphorylase involved in the regulation of the pyruvate, phosphate dikinase (PPDK) by catalyzing its phosphorylation/dephosphorylation. This is Putative pyruvate, phosphate dikinase regulatory protein from Citrifermentans bemidjiense (strain ATCC BAA-1014 / DSM 16622 / JCM 12645 / Bem) (Geobacter bemidjiensis).